The chain runs to 696 residues: Equisetin cluster transcription factor eqxF (696 aa).

Disordered stretches follow at residues 1-24 (MADQVQDVHPMEWGPGKTPQGRAR) and 73-117 (NQEQ…PADY).

The protein resides in the nucleus. Transcription factor that regulates the expression of the gene cluster that mediates the biosynthesis of Equisetin. The chain is Equisetin cluster transcription factor eqxF from Fusarium heterosporum.